Here is a 235-residue protein sequence, read N- to C-terminus: MVNQLEMLYEGKAKKIYATDKEDMVIVHYKDDATAFNGEKKAQIESKGVLNNEITSLIFEMLNKEGIKTHFVEKLNDRDQLCKKVEIVPLEVIVRNVAAGSMAKRLGLEEGYELKTTVFELSYKDDSLGDPLINDYHAVGIGATTFEELNKIYEITAKVNEILKEAFKKQNINLIDFKLEFGRYKGEILLADEISPDTCRFWDAKTGEKMDKDRFRRDMGNVINGYREVLNRLRN.

The protein belongs to the SAICAR synthetase family.

It catalyses the reaction 5-amino-1-(5-phospho-D-ribosyl)imidazole-4-carboxylate + L-aspartate + ATP = (2S)-2-[5-amino-1-(5-phospho-beta-D-ribosyl)imidazole-4-carboxamido]succinate + ADP + phosphate + 2 H(+). It functions in the pathway purine metabolism; IMP biosynthesis via de novo pathway; 5-amino-1-(5-phospho-D-ribosyl)imidazole-4-carboxamide from 5-amino-1-(5-phospho-D-ribosyl)imidazole-4-carboxylate: step 1/2. The sequence is that of Phosphoribosylaminoimidazole-succinocarboxamide synthase from Clostridium perfringens (strain SM101 / Type A).